Here is a 265-residue protein sequence, read N- to C-terminus: Undecaprenyl-diphosphatase (265 aa).

The next 8 membrane-spanning stretches (helical) occupy residues 1–21 (MDFL…FLPI), 39–59 (QGVG…ILYF), 87–107 (WAVV…LDYI), 110–130 (ALRA…LLAA), 144–164 (IGFK…IPGT), 187–207 (FSFF…LLTI), 217–237 (LGFL…IHFF), and 244–264 (FGMW…YLLF).

It belongs to the UppP family.

It is found in the cell inner membrane. It carries out the reaction di-trans,octa-cis-undecaprenyl diphosphate + H2O = di-trans,octa-cis-undecaprenyl phosphate + phosphate + H(+). Functionally, catalyzes the dephosphorylation of undecaprenyl diphosphate (UPP). Confers resistance to bacitracin. This chain is Undecaprenyl-diphosphatase, found in Idiomarina loihiensis (strain ATCC BAA-735 / DSM 15497 / L2-TR).